A 396-amino-acid chain; its full sequence is Ornithine aminotransferase 2 (396 aa).

An N6-(pyridoxal phosphate)lysine modification is found at K255.

Belongs to the class-III pyridoxal-phosphate-dependent aminotransferase family. OAT subfamily. Pyridoxal 5'-phosphate is required as a cofactor.

The protein localises to the cytoplasm. It carries out the reaction a 2-oxocarboxylate + L-ornithine = L-glutamate 5-semialdehyde + an L-alpha-amino acid. It participates in amino-acid biosynthesis; L-proline biosynthesis; L-glutamate 5-semialdehyde from L-ornithine: step 1/1. Functionally, catalyzes the interconversion of ornithine to glutamate semialdehyde. This is Ornithine aminotransferase 2 from Staphylococcus aureus (strain MRSA252).